The chain runs to 876 residues: MSARSAKFMYRSGNAGASGDLSVEYGTDLGALTRLEDKIRLLSDDLESEREMRQRIEREKAELQIQVMSLSERLEEAEGSSESVVEMNKKRDSELAKLRKLLEDVHLESEETAHHLRQKHQAAIQEMQDQLDQVQKAKNKSDKEKQKFQAEVFELLAQLETANKEKLTAMKTVEKLEYTVHELNIKIEEINRTVIELTSQKTRLSQENTELIKEVHEHKMQLDNANHLKQQLAQQLEDTKHRLEEEERKRASLENHAHTLEVELESLKVQLDEESEARLELERQLTKANGDAASWKSKYEAELQAHADEVEELRRKMAQKISEYEEQLEALLNKCSSLAKQKSRLQSEVEVLIMDLEKATTHAQQLEKRVAQLEKLNLDLKNKLEEVTMLMEQAQKEARAKAAELQKLQHEYEKLRDQRDALARENKKLTDDLAECKSQLNDAHRRIHEQEIEIKRLENEREELSAAYKEAETLRKQEEAKNQRLTAELAQVRHDYEKRLAQKEEEIEALRKQYQIEIEQLNMRLAEAEAKLKTEIARLKKKYQAQITELELSLDAANKANIDLQKTIKKQALQITELQAHYDEVHRQLQQAVDQLGVTQRRCQALQAELEEQRIALEQANRAKRQAEQLHEEAVARVNELTTINVNLASAKSKLESEFAALQNDYDEVHKELRISDERVQKLTIELKSTKDLLVEEQERLVKMETVKKSLEQEVRTLHVRIEEVEANALAGGKRVIAKLESRIRDVEIEVEEERRRHAETEKMLRKKDHRLKELLVQNEEDHKQIQLLQEMVDKMNEKVKVYKRQMQETREGMSQQNLTRVRRFQRELEAAEDRADQAESNLSFIRAKHRSWVTTSQVPGGTRQVFVTQEEQSNY.

Residues 1 to 28 (MSARSAKFMYRSGNAGASGDLSVEYGTD) form a nonhelical region region. A coiled-coil region spans residues 29–855 (LGALTRLEDK…IRAKHRSWVT (827 aa)). The nonhelical region stretch occupies residues 856-876 (TSQVPGGTRQVFVTQEEQSNY).

Belongs to the paramyosin family. In terms of assembly, homodimer.

The protein resides in the cytoplasm. The protein localises to the myofibril. Functionally, paramyosin is a major structural component of many thick filaments isolated from invertebrate muscles. This chain is Paramyosin, found in Sarcoptes scabiei (Itch mite).